Here is a 274-residue protein sequence, read N- to C-terminus: Histone H1.1 (274 aa).

Disordered stretches follow at residues M1 to P63 and P129 to V155. S2 carries the post-translational modification N-acetylserine. The segment covering T16–A25 has biased composition (low complexity). Residues N40 to T49 are compositionally biased toward basic and acidic residues. Positions S61–S130 constitute an H15 domain. Over residues P129–S145 the composition is skewed to low complexity. A Glycyl lysine isopeptide (Lys-Gly) (interchain with G-Cter in ubiquitin) cross-link involves residue K161. 2 disordered regions span residues A167–K233 and K249–K274. 2 stretches are compositionally biased toward low complexity: residues A175 to K185 and A221 to K233.

It belongs to the histone H1/H5 family.

The protein resides in the nucleus. Its subcellular location is the chromosome. Functionally, histones H1 are necessary for the condensation of nucleosome chains into higher-order structures. This chain is Histone H1.1, found in Arabidopsis thaliana (Mouse-ear cress).